The sequence spans 91 residues: Small ribosomal subunit protein uS19 (91 aa).

The protein belongs to the universal ribosomal protein uS19 family.

Protein S19 forms a complex with S13 that binds strongly to the 16S ribosomal RNA. The polypeptide is Small ribosomal subunit protein uS19 (Amoebophilus asiaticus (strain 5a2)).